Consider the following 131-residue polypeptide: Histone H2A.2 (131 aa).

The interval 1–22 is disordered; the sequence is MSGGKGKAGSSEKASTSRSAKA. Residue S2 is modified to N-acetylserine. An N6-acetyllysine mark is found at K5 and K7. An N5-methylglutamine modification is found at Q105. A Phosphoserine modification is found at S128. The [ST]-Q motif signature appears at 128-129; the sequence is SQ.

The protein belongs to the histone H2A family. As to quaternary structure, the nucleosome is a histone octamer containing two molecules each of H2A, H2B, H3 and H4 assembled in one H3-H4 heterotetramer and two H2A-H2B heterodimers. The octamer wraps approximately 147 bp of DNA. Phosphorylated to form H2AS128ph (gamma-H2A) in response to DNA double-strand breaks (DSBs) generated by exogenous genotoxic agents and by stalled replication forks. Phosphorylation is dependent on the DNA damage checkpoint kinases MEC1/ATR and TEL1/ATM, spreads on either side of a detected DSB site and may mark the surrounding chromatin for recruitment of proteins required for DNA damage signaling and repair. Gamma-H2A is removed from the DNA prior to the strand invasion-primer extension step of the repair process and subsequently dephosphorylated. Dephosphorylation is necessary for efficient recovery from the DNA damage checkpoint. Post-translationally, acetylated by ESA1 to form H2AK4ac and H2AK7ac.

It is found in the nucleus. Its subcellular location is the chromosome. In terms of biological role, core component of nucleosome which plays a central role in DNA double strand break (DSB) repair. Nucleosomes wrap and compact DNA into chromatin, limiting DNA accessibility to the cellular machineries which require DNA as a template. Histones thereby play a central role in transcription regulation, DNA repair, DNA replication and chromosomal stability. DNA accessibility is regulated via a complex set of post-translational modifications of histones, also called histone code, and nucleosome remodeling. In Candida albicans (strain SC5314 / ATCC MYA-2876) (Yeast), this protein is Histone H2A.2 (HTA2).